A 1414-amino-acid chain; its full sequence is Phenyloxazoline synthase MbtB (1414 aa).

The Carrier 1 domain maps to 5-78 (TACSEIIRAE…AWSQLVSAGT (74 aa)). At serine 39 the chain carries O-(pantetheine 4'-phosphoryl)serine. Positions 96–394 (EGEPFPLAPM…SSLLLDVDLT (299 aa)) are condensation/cyclization. The tract at residues 579–975 (SYAQLRDQAS…RLPGVHAAAA (397 aa)) is adenylation. Residues 1057 to 1135 (APRTVLQRAL…ALAQLLTGRE (79 aa)) enclose the Carrier 2 domain. At serine 1094 the chain carries O-(pantetheine 4'-phosphoryl)serine. The interval 1188–1413 (GAVLVFPHAG…AVARMVSADV (226 aa)) is thioesterase.

Belongs to the ATP-dependent AMP-binding enzyme family. MbtB subfamily. The cofactor is pantetheine 4'-phosphate. Post-translationally, 4'-phosphopantetheine is transferred from CoA to a specific serine in each of the two carrier protein domains, leading to their activation from apo to holo forms.

The protein operates within siderophore biosynthesis; mycobactin biosynthesis. In terms of biological role, involved in the initial steps of the mycobactin biosynthetic pathway. Putatively couples activated salicylic acid with serine or threonine and cyclizes this precursor to the hydroxyphenyloxazoline ring system present in this class of siderophores. The chain is Phenyloxazoline synthase MbtB (mbtB) from Mycobacterium bovis (strain ATCC BAA-935 / AF2122/97).